The sequence spans 398 residues: Steroid C26-monooxygenase (398 aa).

Cys-340 is a heme binding site.

This sequence belongs to the cytochrome P450 family. Heme serves as cofactor.

It catalyses the reaction cholest-4-en-3-one + 6 reduced [2Fe-2S]-[ferredoxin] + 3 O2 + 5 H(+) = (25R)-3-oxocholest-4-en-26-oate + 6 oxidized [2Fe-2S]-[ferredoxin] + 4 H2O. The enzyme catalyses cholest-4-en-3-one + 2 reduced [2Fe-2S]-[ferredoxin] + O2 + 2 H(+) = (25R)-3-oxocholest-4-en-26-ol + 2 oxidized [2Fe-2S]-[ferredoxin] + H2O. The catalysed reaction is (25R)-3-oxocholest-4-en-26-ol + 2 reduced [2Fe-2S]-[ferredoxin] + O2 + 2 H(+) = (25R)-3-oxocholest-4-en-26-al + 2 oxidized [2Fe-2S]-[ferredoxin] + 2 H2O. It carries out the reaction (25R)-3-oxocholest-4-en-26-al + 2 reduced [2Fe-2S]-[ferredoxin] + O2 + H(+) = (25R)-3-oxocholest-4-en-26-oate + 2 oxidized [2Fe-2S]-[ferredoxin] + H2O. It catalyses the reaction cholesterol + NADPH + O2 + H(+) = 26-hydroxycholesterol + NADP(+) + H2O. The enzyme catalyses 26-hydroxycholesterol + 2 reduced [2Fe-2S]-[ferredoxin] + O2 + 2 H(+) = (3beta)-hydroxy-cholest-5-en-26-al + 2 oxidized [2Fe-2S]-[ferredoxin] + 2 H2O. The catalysed reaction is (3beta)-hydroxy-cholest-5-en-26-al + NADPH + O2 = (3beta)-hydroxy-cholest-5-en-26-oate + NADP(+) + H2O. It carries out the reaction (25S)-3-oxocholest-4-en-26-ol + 2 reduced [2Fe-2S]-[ferredoxin] + O2 + 2 H(+) = (25S)-3-oxocholest-4-en-26-al + 2 oxidized [2Fe-2S]-[ferredoxin] + 2 H2O. It catalyses the reaction (25S)-3-oxocholest-4-en-26-al + 2 reduced [2Fe-2S]-[ferredoxin] + O2 + H(+) = (25S)-3-oxocholest-4-en-26-oate + 2 oxidized [2Fe-2S]-[ferredoxin] + H2O. It functions in the pathway steroid metabolism; cholesterol degradation. Inhibited by econazole, clotrimazole and miconazole. In terms of biological role, involved in the utilization of cholesterol as the sole carbon and energy source by degrading the side chain during infection. Primarily catalyzes the sequential oxidation of the terminal methyl of cholest-4-en-3-one into (25R)-26-hydroxycholest-4-en-3-one (alcohol), (25R)-26-oxocholest-4-en-3-one (aldehyde), to finally yield the carboxylic acid (25R)-3-oxocholest-4-en-26-oate. In vitro, Cyp142 catalyzes with equal preference the oxidation of both (25R)- and (25S)-26-hydroxycholest-4-en-3-one diastereomers to the corresponding carboxylic acid which is a prerequisite for entry into the beta-oxidation pathway. Also able to sequentially oxidize cholesterol itself, not only cholest-4-en-3-one. This Mycobacterium tuberculosis (strain ATCC 25618 / H37Rv) protein is Steroid C26-monooxygenase (cyp142).